Reading from the N-terminus, the 129-residue chain is Serum amyloid A-4 protein (129 aa).

The N-terminal stretch at 1-18 (MKLLIGILFCTLIMGVTG) is a signal peptide. The span at 107-121 (AEEWGRSGQDPDHFR) shows a compositional bias: basic and acidic residues. The tract at residues 107-129 (AEEWGRSGQDPDHFRPAGLPKKY) is disordered.

Belongs to the SAA family. As to quaternary structure, apolipoprotein of the HDL complex.

The protein resides in the secreted. Major acute phase reactant. In Bos taurus (Bovine), this protein is Serum amyloid A-4 protein.